The sequence spans 359 residues: Peroxisome assembly protein 12 (359 aa).

The Peroxisomal matrix segment spans residues 1-19 (MAEHGAHFTAASVADDQPS). The helical transmembrane segment at 20-47 (IFEVVAQDSLMTAVRPALQHVVKVLAES) threads the bilayer. Topologically, residues 48 to 51 (NPTH) are cytoplasmic. Residues 52 to 76 (YGFLWRWFDEIFTLLDLLLQQHYLS) form a helical membrane-spanning segment. Residues 77–109 (RTSASFSENFYGLKRIVMGDTHKSQRLASAGLP) lie on the Peroxisomal matrix side of the membrane. Residues 110-139 (KQQLWKSIMFLVLLPYLKVKLEKLVSSLRE) traverse the membrane as a helical segment. Residues 140 to 144 (EDEYS) lie on the Cytoplasmic side of the membrane. A helical transmembrane segment spans residues 145-183 (IHPPSSRWKRFYRAFLAAYPFVNMAWEGWFLVQQLRYIL). At 184-249 (GKAQHHSPLL…VGGVALSLST (66 aa)) the chain is on the peroxisomal matrix side. A helical membrane pass occupies residues 250 to 277 (GLSVGVFFLQFLDWWYSSENQETIKSLT). Topologically, residues 278-359 (ALPTPPPPVH…HLIKLYSPEN (82 aa)) are cytoplasmic. Residues C304, C307, C325, and C328 each contribute to the Zn(2+) site. The RING-type; degenerate zinc finger occupies 304–343 (CPLCRKTRVNDTVLATSGYVFCYRCVFHYVRSHQACPITG).

It belongs to the pex2/pex10/pex12 family. In terms of assembly, component of the PEX2-PEX10-PEX12 retrotranslocation channel, composed of PEX2, PEX10 and PEX12. Interacts with PEX19 via its cytoplasmic domain.

The protein localises to the peroxisome membrane. It functions in the pathway protein modification; protein ubiquitination. Functionally, component of a retrotranslocation channel required for peroxisome organization by mediating export of the PEX5 receptor from peroxisomes to the cytosol, thereby promoting PEX5 recycling. The retrotranslocation channel is composed of PEX2, PEX10 and PEX12; each subunit contributing transmembrane segments that coassemble into an open channel that specifically allows the passage of PEX5 through the peroxisomal membrane. PEX12 also regulates PEX5 recycling by activating the E3 ubiquitin-protein ligase activity of PEX10. When PEX5 recycling is compromised, PEX12 stimulates PEX10-mediated polyubiquitination of PEX5, leading to its subsequent degradation. This Homo sapiens (Human) protein is Peroxisome assembly protein 12.